The primary structure comprises 362 residues: Heat-inducible transcription repressor HrcA (362 aa).

This sequence belongs to the HrcA family.

Its function is as follows. Negative regulator of class I heat shock genes (grpE-dnaK-dnaJ and groELS operons). Prevents heat-shock induction of these operons. This Bradyrhizobium diazoefficiens (strain JCM 10833 / BCRC 13528 / IAM 13628 / NBRC 14792 / USDA 110) protein is Heat-inducible transcription repressor HrcA.